The following is a 457-amino-acid chain: Paired box protein Pax-8 (457 aa).

Residues 9–135 (GHGGLNQLGG…SSINRIIRTK (127 aa)) constitute a DNA-binding region (paired). A PAI subdomain region spans residues 12–68 (GLNQLGGAFVNGRPLPEVVRQRIVDLAHQGVRPCDISRQLRVSHGCVSKILGRYYET). The interval 87–135 (KVVEKIGDYKRQNPTMFAWEIRDRLLAEGVCDNDTVPSVSSINRIIRTK) is RED subdomain. Positions 159–182 (LIPSSAVTPPESPQSDSLGSTYSI) are enriched in polar residues. Residues 159–224 (LIPSSAVTPP…SSSSGPRKHL (66 aa)) form a disordered region. Position 304 is a phosphoserine (Ser-304).

As to quaternary structure, interacts with WWTR1. In terms of tissue distribution, expressed in the developing excretory system and the thyroid gland.

The protein localises to the nucleus. In terms of biological role, thought to encode a transcription factor. It may have a role in kidney cell differentiation. May play a regulatory role in mammalian development. This Mus musculus (Mouse) protein is Paired box protein Pax-8 (Pax8).